Here is a 389-residue protein sequence, read N- to C-terminus: 8-amino-7-oxononanoate synthase (389 aa).

Substrate is bound at residue arginine 31. Pyridoxal 5'-phosphate is bound at residue 109-110; the sequence is GY. Histidine 134 serves as a coordination point for substrate. Residues serine 180, 205–208, and 236–239 each bind pyridoxal 5'-phosphate; these read DEAH and TLSK. Position 239 is an N6-(pyridoxal phosphate)lysine (lysine 239). Threonine 349 serves as a coordination point for substrate.

The protein belongs to the class-II pyridoxal-phosphate-dependent aminotransferase family. BioF subfamily. In terms of assembly, homodimer. It depends on pyridoxal 5'-phosphate as a cofactor.

It carries out the reaction 6-carboxyhexanoyl-[ACP] + L-alanine + H(+) = (8S)-8-amino-7-oxononanoate + holo-[ACP] + CO2. The protein operates within cofactor biosynthesis; biotin biosynthesis. In terms of biological role, catalyzes the decarboxylative condensation of pimeloyl-[acyl-carrier protein] and L-alanine to produce 8-amino-7-oxononanoate (AON), [acyl-carrier protein], and carbon dioxide. This chain is 8-amino-7-oxononanoate synthase, found in Mycobacterium ulcerans (strain Agy99).